A 248-amino-acid chain; its full sequence is Kallikrein-12 (248 aa).

The N-terminal stretch at 1-17 is a signal peptide; that stretch reads MGLSIFLLLCVLGLSQA. The 225-residue stretch at 22-246 folds into the Peptidase S1 domain; that stretch reads IFNGTECGRN…YVDWIRMIMR (225 aa). A glycan (N-linked (GlcNAc...) asparagine) is linked at asparagine 24. 6 disulfides stabilise this stretch: cysteine 28/cysteine 161, cysteine 47/cysteine 63, cysteine 133/cysteine 235, cysteine 140/cysteine 206, cysteine 172/cysteine 186, and cysteine 196/cysteine 222. Residues histidine 62 and aspartate 108 each act as charge relay system in the active site. N-linked (GlcNAc...) asparagine glycosylation occurs at asparagine 163. Serine 200 acts as the Charge relay system in catalysis.

This sequence belongs to the peptidase S1 family. Kallikrein subfamily.

The protein localises to the secreted. The protein is Kallikrein-12 (KLK12) of Homo sapiens (Human).